A 59-amino-acid chain; its full sequence is Potassium channel toxin alpha-KTx 1.14 (59 aa).

Positions Met1–Gly22 are cleaved as a signal peptide. Gln23 is modified (pyrrolidone carboxylic acid). Intrachain disulfides connect Cys29-Cys50, Cys35-Cys55, and Cys39-Cys57.

This sequence belongs to the short scorpion toxin superfamily. Potassium channel inhibitor family. Alpha-KTx 01 subfamily. As to expression, expressed by the venom gland.

The protein resides in the secreted. Functionally, potent blocker of both large-conductance calcium-activated potassium channels (KCa1.1/KCNMA1) and voltage-gated potassium channels (Kv1.3/KCNA3 and ERG1/Kv11.1/KCNH2). This is Potassium channel toxin alpha-KTx 1.14 from Olivierus martensii (Manchurian scorpion).